The primary structure comprises 1229 residues: DNA-directed RNA polymerase subunit beta (1229 aa).

The interval Glu-1175–Glu-1229 is disordered. Acidic residues-rich tracts occupy residues Glu-1195 to Asp-1204 and Asp-1211 to Glu-1229.

This sequence belongs to the RNA polymerase beta chain family. In terms of assembly, the RNAP catalytic core consists of 2 alpha, 1 beta, 1 beta' and 1 omega subunit. When a sigma factor is associated with the core the holoenzyme is formed, which can initiate transcription.

It catalyses the reaction RNA(n) + a ribonucleoside 5'-triphosphate = RNA(n+1) + diphosphate. In terms of biological role, DNA-dependent RNA polymerase catalyzes the transcription of DNA into RNA using the four ribonucleoside triphosphates as substrates. The polypeptide is DNA-directed RNA polymerase subunit beta (Caldicellulosiruptor saccharolyticus (strain ATCC 43494 / DSM 8903 / Tp8T 6331)).